The following is a 133-amino-acid chain: Ubiquitin-like FUBI-ribosomal protein eS30 fusion protein (133 aa).

The tract at residues 84–110 (GKVRGQTPKVAKQEKKKKKTGRAKRRM) is disordered. Residues 97–110 (EKKKKKTGRAKRRM) are compositionally biased toward basic residues. Lysine 125 is modified (N6-succinyllysine).

The protein in the N-terminal section; belongs to the ubiquitin family. It in the C-terminal section; belongs to the eukaryotic ribosomal protein eS30 family. Component of the 40S subunit of the ribosome. Post-translationally, FUBI is cleaved from ribosomal protein S30 by the deubiquitinase USP36 before the assembly of ribosomal protein S30 into pre-40S ribosomal particles. FUBI removal from ribosomal protein S30 is a crucial event for the final maturation of pre-40S particles.

It is found in the nucleus. It localises to the cytoplasm. Its function is as follows. May have pro-apoptotic activity. Component of the 40S subunit of the ribosome. Contributes to the assembly and function of 40S ribosomal subunits. The polypeptide is Ubiquitin-like FUBI-ribosomal protein eS30 fusion protein (Fau) (Mus musculus (Mouse)).